The sequence spans 590 residues: Pentatricopeptide repeat-containing protein At1g63070, mitochondrial (590 aa).

The transit peptide at M1–F34 directs the protein to the mitochondrion. PPR repeat units follow at residues S74–H108, N109–P143, S144–P178, D179–P213, D214–A248, D249–P283, D284–P318, D319–F353, D355–G389, N390–P424, D425–L459, D460–P494, N495–P529, and N530–G564.

It belongs to the PPR family. P subfamily.

It localises to the mitochondrion. The protein is Pentatricopeptide repeat-containing protein At1g63070, mitochondrial of Arabidopsis thaliana (Mouse-ear cress).